A 443-amino-acid polypeptide reads, in one-letter code: Ribosomal protein uS12 methylthiotransferase RimO (443 aa).

Residues 5 to 115 (PNIGFISLGC…VMKHVHKYVP (111 aa)) enclose the MTTase N-terminal domain. 6 residues coordinate [4Fe-4S] cluster: C14, C50, C79, C147, C151, and C154. The Radical SAM core domain occupies 133–374 (LTPKHYAYLK…MQVQQRISAA (242 aa)). The 67-residue stretch at 377-443 (QQKVGKTLAV…ADEYDLWGTC (67 aa)) folds into the TRAM domain.

It belongs to the methylthiotransferase family. RimO subfamily. Requires [4Fe-4S] cluster as cofactor.

The protein localises to the cytoplasm. It carries out the reaction L-aspartate(89)-[ribosomal protein uS12]-hydrogen + (sulfur carrier)-SH + AH2 + 2 S-adenosyl-L-methionine = 3-methylsulfanyl-L-aspartate(89)-[ribosomal protein uS12]-hydrogen + (sulfur carrier)-H + 5'-deoxyadenosine + L-methionine + A + S-adenosyl-L-homocysteine + 2 H(+). Functionally, catalyzes the methylthiolation of an aspartic acid residue of ribosomal protein uS12. In Actinobacillus pleuropneumoniae serotype 7 (strain AP76), this protein is Ribosomal protein uS12 methylthiotransferase RimO.